The primary structure comprises 194 residues: Probable GTP-binding protein EngB (194 aa).

The EngB-type G domain occupies 23–194 (LNGEFVFVGR…YELIEIFGGV (172 aa)). GTP contacts are provided by residues 31 to 38 (GRSNVGKS), 57 to 61 (GKTAS), 75 to 78 (DLPG), 143 to 146 (TKMD), and 173 to 175 (YSA). Residues Ser-38 and Thr-59 each contribute to the Mg(2+) site.

The protein belongs to the TRAFAC class TrmE-Era-EngA-EngB-Septin-like GTPase superfamily. EngB GTPase family. It depends on Mg(2+) as a cofactor.

Functionally, necessary for normal cell division and for the maintenance of normal septation. This chain is Probable GTP-binding protein EngB, found in Thermosipho africanus (strain TCF52B).